Reading from the N-terminus, the 115-residue chain is Somatostatin-1 (115 aa).

Residues M1 to A24 form the signal peptide. A propeptide spanning residues A25 to E99 is cleaved from the precursor. The segment at S60 to D79 is disordered. C104 and C115 form a disulfide bridge.

Belongs to the somatostatin family.

The protein resides in the secreted. Its function is as follows. Somatostatin inhibits the release of somatotropin. This chain is Somatostatin-1 (sst1), found in Pelophylax ridibundus (Marsh frog).